The primary structure comprises 542 residues: Chaperonin GroEL 1 (542 aa).

Residues 29–32, 86–90, Gly-413, 477–479, and Asp-493 each bind ATP; these read TLGP, DGTTT, and NAA.

The protein belongs to the chaperonin (HSP60) family. As to quaternary structure, forms a cylinder of 14 subunits composed of two heptameric rings stacked back-to-back. Interacts with the co-chaperonin GroES.

Its subcellular location is the cytoplasm. The catalysed reaction is ATP + H2O + a folded polypeptide = ADP + phosphate + an unfolded polypeptide.. Together with its co-chaperonin GroES, plays an essential role in assisting protein folding. The GroEL-GroES system forms a nano-cage that allows encapsulation of the non-native substrate proteins and provides a physical environment optimized to promote and accelerate protein folding. This chain is Chaperonin GroEL 1, found in Renibacterium salmoninarum (strain ATCC 33209 / DSM 20767 / JCM 11484 / NBRC 15589 / NCIMB 2235).